A 204-amino-acid polypeptide reads, in one-letter code: MPKNKKTEWQVGDPAISVVSDQFCNPYPMDLLVKRKVQNFSKDYYEVFDPSGNLLLQIDGQAWGFNRKRVMRDPAGFTILSMRQKGLALKNKWEVHGGESKEREDLLFTVQQSQAVSLKTSVDVFLPENNNVKKTNTCDFHASGGYSNISFKVFKADALIAGVGFTWGSFCKGKYNFKVRVNPEVDYAFIIALLVMVDDNENWC.

The protein belongs to the LOR family.

Might be related to the phospholipid scramblase and tubby-like superfamily of membrane tethered transcription factors. The protein is Protein LURP-one-related 14 of Arabidopsis thaliana (Mouse-ear cress).